A 395-amino-acid chain; its full sequence is Putative ankyrin repeat protein RF_0950 (395 aa).

ANK repeat units follow at residues 3–32 (YQKE…NPNT), 36–65 (YGKL…DPNA), 69–98 (IKDP…NPNV), 101–130 (RHEN…DPNQ), 134–166 (NGNT…EKAL), 172–201 (NGET…TVNI), and 205–234 (AGNT…ELNE). A Glutamine amidotransferase type-1 domain is found at 272 to 395 (KTKLIYQGGD…YLKVPILKEK (124 aa)). C377 functions as the Nucleophile in the catalytic mechanism.

The chain is Putative ankyrin repeat protein RF_0950 from Rickettsia felis (strain ATCC VR-1525 / URRWXCal2) (Rickettsia azadi).